We begin with the raw amino-acid sequence, 377 residues long: Endolytic peptidoglycan transglycosylase RlpA (377 aa).

An N-terminal signal peptide occupies residues 1–19 (MHKQLPVICVAAGIVLLAA). Cys-20 carries N-palmitoyl cysteine lipidation. Cys-20 carries S-diacylglycerol cysteine lipidation. Residues 196–277 (LPPRPDLSGG…PVSAPVTAPA (82 aa)) form a disordered region. Composition is skewed to low complexity over residues 208 to 218 (SASSAPAQPQG) and 264 to 277 (PQTA…TAPA). The 77-residue stretch at 300–376 (AAASGRFVVQ…AQLQSFIASA (77 aa)) folds into the SPOR domain.

The protein belongs to the RlpA family.

It is found in the cell membrane. In terms of biological role, lytic transglycosylase with a strong preference for naked glycan strands that lack stem peptides. The sequence is that of Endolytic peptidoglycan transglycosylase RlpA from Salmonella typhi.